A 78-amino-acid polypeptide reads, in one-letter code: Large ribosomal subunit protein eL20 (78 aa).

Belongs to the eukaryotic ribosomal protein eL20 family. Part of the 50S ribosomal subunit. Binds 23S rRNA.

This chain is Large ribosomal subunit protein eL20, found in Pyrobaculum islandicum (strain DSM 4184 / JCM 9189 / GEO3).